A 414-amino-acid polypeptide reads, in one-letter code: Probable sugar phosphate/phosphate translocator At1g06470 (414 aa).

The next 9 membrane-spanning stretches (helical) occupy residues 72–92, 101–121, 172–192, 197–217, 224–244, 259–279, 303–323, 328–348, and 354–374; these read VLKT…LTLY, LGKF…QAVL, TFAT…AFAF, PSLK…LTVA, FWGF…WCMT, FIFM…LSLL, FLML…YVLV, AVTV…VAVF, and FTWL…LFNW. The EamA domain occupies 106 to 216; the sequence is APLLMNTIHF…VISAGVLLTV (111 aa).

This sequence belongs to the TPT transporter family. TPT (TC 2.A.7.9) subfamily.

It localises to the membrane. This Arabidopsis thaliana (Mouse-ear cress) protein is Probable sugar phosphate/phosphate translocator At1g06470.